The chain runs to 229 residues: Ribonuclease 3 (229 aa).

An RNase III domain is found at 5-127 (LARLERQLGY…LIGAIYLDAG (123 aa)). E40 lines the Mg(2+) pocket. The active site involves D44. Positions 113 and 116 each coordinate Mg(2+). The active site involves E116. The DRBM domain occupies 154-224 (DPKTRLQEFL…AAAALIALGV (71 aa)).

It belongs to the ribonuclease III family. Homodimer. It depends on Mg(2+) as a cofactor.

It localises to the cytoplasm. It carries out the reaction Endonucleolytic cleavage to 5'-phosphomonoester.. Digests double-stranded RNA. Involved in the processing of primary rRNA transcript to yield the immediate precursors to the large and small rRNAs (23S and 16S). Processes some mRNAs, and tRNAs when they are encoded in the rRNA operon. Processes pre-crRNA and tracrRNA of type II CRISPR loci if present in the organism. In Pseudomonas fluorescens (strain SBW25), this protein is Ribonuclease 3.